Here is a 566-residue protein sequence, read N- to C-terminus: MKQSMVFSPTLREVPADAEIKSHQLLLRAGFMRQNASGIYSFLPFGLKVLHKVERIVREEMERAGAVELLMPAMQAAELWQESGRWYSYGSELMRMKDRNAREFALGATHEEVITDLVRDEVKSYKKLPLTLYQIQTKFRDEQRPRFGLLRGREFLMKDAYSFHATQESLDEVYDRLYKAYSNIFARCGLNFRAVIADSGAMGGKDTHEFMVLSDVGEDTIAYSDTSDYAANIEMAPVVATYTKSDEAEKALEKVATPDQKAIEEVSAFLNIAADKCIKSMVFKVDEKLVVVLVRGDHEVNDVKVKNVYGASVVELASHEEVKALLNCEVGSLGPINVTGDIEIIADHAVASIVNGCSGANEEGFHYVNVNPERDFKVSQYTDLRFIQEGDQSPDGNGTILFARGIEVGHVFKLGTRYSEAMNATFLDENGKTQPLIMGCYGIGVSRTVAAIAEQFNDENGLVWPKAVAPFHVHVIPVNMKSDAQREMGENIYNSLQEQGYEVLLDDRAERAGVKFADADLFGLPVRVTVGKKADEGIVEVKVRATGESEEVNVEELQTYIANILK.

This sequence belongs to the class-II aminoacyl-tRNA synthetase family. ProS type 1 subfamily. Homodimer.

The protein localises to the cytoplasm. It catalyses the reaction tRNA(Pro) + L-proline + ATP = L-prolyl-tRNA(Pro) + AMP + diphosphate. Catalyzes the attachment of proline to tRNA(Pro) in a two-step reaction: proline is first activated by ATP to form Pro-AMP and then transferred to the acceptor end of tRNA(Pro). As ProRS can inadvertently accommodate and process non-cognate amino acids such as alanine and cysteine, to avoid such errors it has two additional distinct editing activities against alanine. One activity is designated as 'pretransfer' editing and involves the tRNA(Pro)-independent hydrolysis of activated Ala-AMP. The other activity is designated 'posttransfer' editing and involves deacylation of mischarged Ala-tRNA(Pro). The misacylated Cys-tRNA(Pro) is not edited by ProRS. The chain is Proline--tRNA ligase from Bacillus cereus (strain B4264).